The chain runs to 226 residues: 3-dehydroquinate dehydratase (226 aa).

3-dehydroquinate contacts are provided by residues E33–R35 and R65. H121 (proton donor/acceptor) is an active-site residue. K146 acts as the Schiff-base intermediate with substrate in catalysis. 3-dehydroquinate is bound by residues R188, S207, and Q211.

The protein belongs to the type-I 3-dehydroquinase family. As to quaternary structure, homodimer.

It catalyses the reaction 3-dehydroquinate = 3-dehydroshikimate + H2O. The protein operates within metabolic intermediate biosynthesis; chorismate biosynthesis; chorismate from D-erythrose 4-phosphate and phosphoenolpyruvate: step 3/7. Functionally, involved in the third step of the chorismate pathway, which leads to the biosynthesis of aromatic amino acids. Catalyzes the cis-dehydration of 3-dehydroquinate (DHQ) and introduces the first double bond of the aromatic ring to yield 3-dehydroshikimate. The polypeptide is 3-dehydroquinate dehydratase (Lactococcus lactis subsp. lactis (strain IL1403) (Streptococcus lactis)).